A 153-amino-acid chain; its full sequence is 6,7-dimethyl-8-ribityllumazine synthase (153 aa).

5-amino-6-(D-ribitylamino)uracil-binding positions include Phe-22, 56–58 (AFE), and 80–82 (AVI). Position 85–86 (85–86 (ST)) interacts with (2S)-2-hydroxy-3-oxobutyl phosphate. The active-site Proton donor is His-88. A 5-amino-6-(D-ribitylamino)uracil-binding site is contributed by Phe-113. (2S)-2-hydroxy-3-oxobutyl phosphate is bound at residue Arg-127.

It belongs to the DMRL synthase family.

It carries out the reaction (2S)-2-hydroxy-3-oxobutyl phosphate + 5-amino-6-(D-ribitylamino)uracil = 6,7-dimethyl-8-(1-D-ribityl)lumazine + phosphate + 2 H2O + H(+). It functions in the pathway cofactor biosynthesis; riboflavin biosynthesis; riboflavin from 2-hydroxy-3-oxobutyl phosphate and 5-amino-6-(D-ribitylamino)uracil: step 1/2. Its function is as follows. Catalyzes the formation of 6,7-dimethyl-8-ribityllumazine by condensation of 5-amino-6-(D-ribitylamino)uracil with 3,4-dihydroxy-2-butanone 4-phosphate. This is the penultimate step in the biosynthesis of riboflavin. This Clostridium botulinum (strain Alaska E43 / Type E3) protein is 6,7-dimethyl-8-ribityllumazine synthase.